A 470-amino-acid chain; its full sequence is Solute carrier family 7 member 13 (470 aa).

The Cytoplasmic portion of the chain corresponds to 1–11 (MDRGEKIQLKR). Residues 12 to 32 (VFGYWWGTSFLLINIIGAGIF) traverse the membrane as a helical segment. Residues 33-45 (VSPKGVLAYSCMN) lie on the Extracellular side of the membrane. The chain crosses the membrane as a helical span at residues 46–66 (VGVSLCVWAGCAILAMTSTLC). Residues 67 to 87 (SAEISISFPCSGAQYYFLKRY) are Cytoplasmic-facing. A helical transmembrane segment spans residues 88–108 (FGSTVAFLNLWTSLFLGSGVV). Over 109-128 (AGQALLLAEYSIQPFFPSCS) the chain is Extracellular. A helical transmembrane segment spans residues 129–149 (VPKLPKKCLALAMLWIVGILT). The Cytoplasmic segment spans residues 150 to 162 (SRGVKEVTWLQIA). The chain crosses the membrane as a helical span at residues 163-183 (SSVLKVSILSFISLTGVVFLI). At 184-206 (RGKKENVERFQNAFDAELPDISH) the chain is on the extracellular side. A helical transmembrane segment spans residues 207–227 (LIQAIFQGYFAYSGGACFTLI). Over 228-240 (AGELKKPRTTIPK) the chain is Cytoplasmic. Residues 241–261 (CIFTALPLVTVVYLLVNISYL) form a helical membrane-spanning segment. Over 262 to 287 (TVLTPREILSSDAVAITWADRAFPSL) the chain is Extracellular. Residues 288–308 (AWIMPFAISTSLFSNLLISIF) form a helical membrane-spanning segment. Topologically, residues 309-336 (KSSRPIYLASQEGQLPLLFNTLNSHSSP) are cytoplasmic. A helical transmembrane segment spans residues 337–357 (FTAVLLLVTLGSLAIILTSLI). Aspartate 358 is a topological domain (extracellular). A helical membrane pass occupies residues 359–379 (LINYIFFTGSLWSILLMIGIL). Over 380–393 (RRRYQEPNLSIPYK) the chain is Cytoplasmic. A helical membrane pass occupies residues 394-414 (VFLSFPLATIVIDVGLVVIPL). Over 415 to 421 (VKSPNVH) the chain is Extracellular. Residues 422-442 (YVYVLLLVLSGLLFYIPLIHF) form a helical membrane-spanning segment. The Cytoplasmic segment spans residues 443–470 (KIRLAWFEKMTCYLQLLFNICLPDVSEE).

The protein belongs to the amino acid-polyamine-organocation (APC) superfamily. As to quaternary structure, disulfide-linked heterodimer composed of the catalytic light subunit SLC7A13 and the heavy subunit SLC3A1. In terms of tissue distribution, expressed in the kidney.

It is found in the apical cell membrane. The catalysed reaction is L-cystine(out) + L-aspartate(in) = L-cystine(in) + L-aspartate(out). It carries out the reaction L-cystine(out) = L-cystine(in). It catalyses the reaction L-aspartate(in) + L-glutamate(out) = L-aspartate(out) + L-glutamate(in). The enzyme catalyses L-aspartate(in) + L-glutamine(out) = L-aspartate(out) + L-glutamine(in). The catalysed reaction is L-aspartate(in) + L-methionine(out) = L-aspartate(out) + L-methionine(in). It carries out the reaction L-leucine(out) + L-aspartate(in) = L-leucine(in) + L-aspartate(out). It catalyses the reaction L-valine(out) + L-aspartate(in) = L-valine(in) + L-aspartate(out). The enzyme catalyses L-aspartate(in) + L-phenylalanine(out) = L-aspartate(out) + L-phenylalanine(in). The catalysed reaction is L-tyrosine(out) + L-aspartate(in) = L-tyrosine(in) + L-aspartate(out). It carries out the reaction L-tryptophan(out) + L-aspartate(in) = L-tryptophan(in) + L-aspartate(out). Functionally, associates with SLC3A1/rBAT to form a functional heterodimeric complex that transports anionic and neutral amino acids across the apical plasma membrane of renal epithelium. Preferentially mediates exchange transport, but can also operate via facilitated diffusion. May act as a major transporter for L-cystine in late proximal tubules, ensuring its reabsorption from the luminal fluid in exchange for cytosolic L-glutamate or L-aspartate. In Homo sapiens (Human), this protein is Solute carrier family 7 member 13 (SLC7A13).